The primary structure comprises 435 residues: tRNA-2-methylthio-N(6)-dimethylallyladenosine synthase (435 aa).

An MTTase N-terminal domain is found at 1–117 (MKYFIKTYGC…MPKLLEDVKV (117 aa)). Residues cysteine 10, cysteine 46, cysteine 80, cysteine 156, cysteine 160, and cysteine 163 each coordinate [4Fe-4S] cluster. The Radical SAM core domain maps to 142–370 (RDNSYCAYVT…LEIQKAITSK (229 aa)). The TRAM domain occupies 373-433 (QRYKNTVQKV…FQSLDGVVQN (61 aa)).

It belongs to the methylthiotransferase family. MiaB subfamily. In terms of assembly, monomer. Requires [4Fe-4S] cluster as cofactor.

Its subcellular location is the cytoplasm. The catalysed reaction is N(6)-dimethylallyladenosine(37) in tRNA + (sulfur carrier)-SH + AH2 + 2 S-adenosyl-L-methionine = 2-methylsulfanyl-N(6)-dimethylallyladenosine(37) in tRNA + (sulfur carrier)-H + 5'-deoxyadenosine + L-methionine + A + S-adenosyl-L-homocysteine + 2 H(+). Catalyzes the methylthiolation of N6-(dimethylallyl)adenosine (i(6)A), leading to the formation of 2-methylthio-N6-(dimethylallyl)adenosine (ms(2)i(6)A) at position 37 in tRNAs that read codons beginning with uridine. The protein is tRNA-2-methylthio-N(6)-dimethylallyladenosine synthase of Hydrogenobaculum sp. (strain Y04AAS1).